A 398-amino-acid chain; its full sequence is Metallophosphoesterase 1 (398 aa).

A helical membrane pass occupies residues 25 to 45; sequence VCFVSSVLIFCEFFIYYLVIF. 6 residues coordinate a divalent metal cation: aspartate 75, aspartate 117, asparagine 155, histidine 251, histidine 305, and histidine 307. A helical transmembrane segment spans residues 359–379; that stretch reads VFAIYWAAGALLVVLVLAHFQ. The Di-lysine motif signature appears at 394 to 398; that stretch reads KHKAA.

This sequence belongs to the metallophosphoesterase superfamily. MPPE1 family. Mn(2+) serves as cofactor.

It localises to the endoplasmic reticulum-Golgi intermediate compartment membrane. Metallophosphoesterase that catalyzes the removal of a side-chain ethanolamine-phosphate (EtNP) from the second mannose of the GPI-anchor protein intermediate. Participates in the glycan remodeling steps of GPI-anchor maturation to allow an efficient transport of GPI-anchor proteins from the endoplasmic reticulum to the Golgi. In Gallus gallus (Chicken), this protein is Metallophosphoesterase 1.